The following is a 266-amino-acid chain: Segregation and condensation protein A (266 aa).

This sequence belongs to the ScpA family. As to quaternary structure, component of a cohesin-like complex composed of ScpA, ScpB and the Smc homodimer, in which ScpA and ScpB bind to the head domain of Smc. The presence of the three proteins is required for the association of the complex with DNA.

Its subcellular location is the cytoplasm. Its function is as follows. Participates in chromosomal partition during cell division. May act via the formation of a condensin-like complex containing Smc and ScpB that pull DNA away from mid-cell into both cell halves. This chain is Segregation and condensation protein A, found in Coxiella burnetii (strain RSA 493 / Nine Mile phase I).